Reading from the N-terminus, the 961-residue chain is Outer capsid protein VP2 (961 aa).

Belongs to the orbivirus VP2 family.

Its subcellular location is the virion. Its function is as follows. The VP2 protein is one of the two proteins (with VP5) which constitute the virus particle outer capsid. It is the major target of the host immunogenic response. Responsible for viral attachment to target host cell, probably by binding to sialic acid. This attachment induces virion internalization predominantly through clathrin-dependent endocytosis. This is Outer capsid protein VP2 (Segment-2) from Bluetongue virus 1 (isolate South Africa vaccine) (BTV 1).